We begin with the raw amino-acid sequence, 517 residues long: 2-isopropylmalate synthase (517 aa).

The 263-residue stretch at 5–267 (VIIFDTTLRD…HTNVRCQEIY (263 aa)) folds into the Pyruvate carboxyltransferase domain. Asp-14, His-202, His-204, and Asn-238 together coordinate Mn(2+). The regulatory domain stretch occupies residues 392–517 (RLKCFHVDSS…QRKYIKKNNN (126 aa)).

Belongs to the alpha-IPM synthase/homocitrate synthase family. LeuA type 1 subfamily. As to quaternary structure, homodimer. It depends on Mn(2+) as a cofactor.

It is found in the cytoplasm. It carries out the reaction 3-methyl-2-oxobutanoate + acetyl-CoA + H2O = (2S)-2-isopropylmalate + CoA + H(+). It functions in the pathway amino-acid biosynthesis; L-leucine biosynthesis; L-leucine from 3-methyl-2-oxobutanoate: step 1/4. In terms of biological role, catalyzes the condensation of the acetyl group of acetyl-CoA with 3-methyl-2-oxobutanoate (2-ketoisovalerate) to form 3-carboxy-3-hydroxy-4-methylpentanoate (2-isopropylmalate). The protein is 2-isopropylmalate synthase of Blochmanniella pennsylvanica (strain BPEN).